Reading from the N-terminus, the 610-residue chain is Glutamine--fructose-6-phosphate aminotransferase [isomerizing] (610 aa).

Catalysis depends on C2, which acts as the Nucleophile; for GATase activity. The 220-residue stretch at 2 to 221 folds into the Glutamine amidotransferase type-2 domain; it reads CGIVGAVAQR…DGDVVDLQLA (220 aa). SIS domains follow at residues 286–426 and 459–600; these read AYKV…TRGR and WADR…VDKP. K605 serves as the catalytic For Fru-6P isomerization activity.

As to quaternary structure, homodimer.

Its subcellular location is the cytoplasm. It catalyses the reaction D-fructose 6-phosphate + L-glutamine = D-glucosamine 6-phosphate + L-glutamate. In terms of biological role, catalyzes the first step in hexosamine metabolism, converting fructose-6P into glucosamine-6P using glutamine as a nitrogen source. The protein is Glutamine--fructose-6-phosphate aminotransferase [isomerizing] of Bordetella pertussis (strain Tohama I / ATCC BAA-589 / NCTC 13251).